The following is a 165-amino-acid chain: Leukotoxin-activating lysine-acyltransferase LktC (165 aa).

Catalysis depends on residues His-22 and Asp-91.

This sequence belongs to the RTX toxin acyltransferase family.

Its subcellular location is the cytoplasm. It carries out the reaction a fatty acyl-[ACP] + L-lysyl-[protein] = N(6)-(fatty acyl)-L-lysyl-[protein] + holo-[ACP] + H(+). Functionally, involved in fatty acylation of the protoxin (LktA) at two internal lysine residues, thereby converting it to the active toxin. This Pasteurella haemolytica-like sp. (strain 5943B) protein is Leukotoxin-activating lysine-acyltransferase LktC (lktC).